The chain runs to 120 residues: Ribosome-binding factor A (120 aa).

Belongs to the RbfA family. As to quaternary structure, monomer. Binds 30S ribosomal subunits, but not 50S ribosomal subunits or 70S ribosomes.

Its subcellular location is the cytoplasm. Its function is as follows. One of several proteins that assist in the late maturation steps of the functional core of the 30S ribosomal subunit. Associates with free 30S ribosomal subunits (but not with 30S subunits that are part of 70S ribosomes or polysomes). Required for efficient processing of 16S rRNA. May interact with the 5'-terminal helix region of 16S rRNA. The chain is Ribosome-binding factor A from Clostridium botulinum (strain ATCC 19397 / Type A).